We begin with the raw amino-acid sequence, 185 residues long: Elongation factor P (185 aa).

This sequence belongs to the elongation factor P family.

Its subcellular location is the cytoplasm. It functions in the pathway protein biosynthesis; polypeptide chain elongation. Functionally, involved in peptide bond synthesis. Stimulates efficient translation and peptide-bond synthesis on native or reconstituted 70S ribosomes in vitro. Probably functions indirectly by altering the affinity of the ribosome for aminoacyl-tRNA, thus increasing their reactivity as acceptors for peptidyl transferase. The protein is Elongation factor P of Bordetella petrii (strain ATCC BAA-461 / DSM 12804 / CCUG 43448).